We begin with the raw amino-acid sequence, 1230 residues long: SAM and SH3 domain-containing protein 1 (1230 aa).

The span at 1–10 (MEEDAGAASP) shows a compositional bias: low complexity. Residues 1–30 (MEEDAGAASPAPEPEPEVDPARELEPEAGV) are disordered. 2 positions are modified to phosphoserine: Ser-83 and Ser-241. Disordered stretches follow at residues 211-249 (RQSS…EDSV) and 275-337 (KKPS…LDTW). Over residues 275 to 297 (KKPSAEGGEEHVFENSPVQDERS) the composition is skewed to basic and acidic residues. Low complexity predominate over residues 324-336 (SLTPSPSSSSLDT). Position 400 is a phosphoserine (Ser-400). Disordered regions lie at residues 439–566 (PRIS…YDTD), 610–633 (EEKP…SVED), and 705–792 (VDNQ…KSCD). The span at 461–470 (KYSSPVSEQD) shows a compositional bias: polar residues. Basic and acidic residues predominate over residues 485–494 (PDSEHVDKPK). Positions 498-516 (GGSVESLRSSLSGQSSMSG) are enriched in low complexity. The segment covering 517–529 (QTVSTTDSSTSNR) has biased composition (polar residues). In terms of domain architecture, SH3 spans 547–608 (PFCGRARVHT…KFIYVDVLNE (62 aa)). Residues 615 to 624 (RPTRRRKKGR) are compositionally biased toward basic residues. Residues 626–690 (SQPKSVEDLL…LTAVELLQEY (65 aa)) form the SAM 1 domain. Positions 737–758 (VLSTKSSTESNLKSFTRSQPGN) are enriched in polar residues. Basic and acidic residues predominate over residues 768–779 (GEVRKQGEEGRL). 2 positions are modified to phosphoserine: Ser-813 and Ser-831. Disordered regions lie at residues 818-875 (EGPE…LPRG) and 915-1045 (PPQC…PWLA). The required for interaction with TRAF6 stretch occupies residues 844–852 (NVPTEMPET). Over residues 852–868 (TCSQNVPEVPQKTSACT) the composition is skewed to polar residues. Residues 940–956 (GLRKGHDHHPLGTKEGV) show a composition bias toward basic and acidic residues. The span at 962–972 (APETRTQSRHP) shows a compositional bias: polar residues. Over residues 1008 to 1019 (SPASPVSPSDCP) the composition is skewed to low complexity. One can recognise an SAM 2 domain in the interval 1160–1224 (GCVASMSDWL…ITAARLFKLP (65 aa)).

In terms of assembly, interacts with GNAS. Interacts with IQGAP1. Interacts with TRAF6 (via C-terminus); the interaction is LPS-dependent. Interacts with MAP3K7, CHUK and IKBKB. Expressed in the microvascular endothelium of various organs, as well as in parenchymal cells. Expressed in the endothelium but not lymphoid cells of spleen and thymus.

The protein localises to the cytoplasm. In terms of biological role, is a positive regulator of NF-kappa-B signaling downstream of TLR4 activation. It acts as a scaffold molecule to assemble a molecular complex that includes TRAF6, MAP3K7, CHUK and IKBKB, thereby facilitating NF-kappa-B signaling activation. Regulates TRAF6 and MAP3K7 ubiquitination. Involved in the regulation of cell mobility. Regulates lipolysaccharide (LPS)-induced endothelial cell migration. Is involved in the regulation of skin pigmentation through the control of melanocyte migration in the epidermis. This is SAM and SH3 domain-containing protein 1 (Sash1) from Mus musculus (Mouse).